The chain runs to 734 residues: Sulfate transporter (734 aa).

The segment covering 1-11 has biased composition (polar residues); the sequence is MSLKNGEQNDL. Residues 1-38 form a disordered region; sequence MSLKNGEQNDLSPKDSVKGNDQYRSPSGIHVEHEEESR. Phosphoserine occurs at positions 12 and 16. Transmembrane regions (helical) follow at residues 113–133 and 138–158; these read MMSG…YSLL and PIYG…LGTS. N194 and N204 each carry an N-linked (GlcNAc...) asparagine glycan. Helical transmembrane passes span 222-242, 247-267, 269-289, 292-312, 379-399, 415-435, 453-473, and 519-539; these read FVAG…VSVY, LLGG…VKYL, GLSL…IHIF, IHKT…VLLP, VDAI…SEMF, AIGF…SAAL, VMTA…FFSL, and LIST…CVIL. The STAS domain maps to 563–714; sequence AYKNLQAKSG…YSVYEAMTFA (152 aa).

This sequence belongs to the SLC26A/SulP transporter (TC 2.A.53) family. N-glycosylated.

It localises to the cell membrane. The protein localises to the apical cell membrane. It carries out the reaction oxalate(in) + sulfate(out) = oxalate(out) + sulfate(in). The catalysed reaction is sulfate(out) + 2 chloride(in) = sulfate(in) + 2 chloride(out). It catalyses the reaction oxalate(out) + 2 chloride(in) = oxalate(in) + 2 chloride(out). The enzyme catalyses bromide(in) + chloride(out) = bromide(out) + chloride(in). It carries out the reaction nitrate(in) + chloride(out) = nitrate(out) + chloride(in). The catalysed reaction is iodide(in) + chloride(out) = iodide(out) + chloride(in). Its function is as follows. Sulfate transporter which mediates sulfate uptake into chondrocytes in order to maintain adequate sulfation of proteoglycans which is needed for cartilage development. Mediates electroneutral anion exchange of sulfate ions for oxalate ions, sulfate and oxalate ions for chloride and/or hydroxyl ions and chloride ions for bromide, iodide and nitrate ions. The coupling of sulfate transport to both hydroxyl and chloride ions likely serves to ensure transport at both acidic pH when most sulfate uptake is mediated by sulfate-hydroxide exchange and alkaline pH when most sulfate uptake is mediated by sulfate-chloride exchange. Essential for chondrocyte proliferation, differentiation and cell size expansion. This is Sulfate transporter (SLC26A2) from Ovis aries (Sheep).